Consider the following 301-residue polypeptide: Sulfate adenylyltransferase subunit 2 1 (301 aa).

Belongs to the PAPS reductase family. CysD subfamily. Heterodimer composed of CysD, the smaller subunit, and CysN.

It catalyses the reaction sulfate + ATP + H(+) = adenosine 5'-phosphosulfate + diphosphate. It functions in the pathway sulfur metabolism; hydrogen sulfide biosynthesis; sulfite from sulfate: step 1/3. In terms of biological role, with CysN forms the ATP sulfurylase (ATPS) that catalyzes the adenylation of sulfate producing adenosine 5'-phosphosulfate (APS) and diphosphate, the first enzymatic step in sulfur assimilation pathway. APS synthesis involves the formation of a high-energy phosphoric-sulfuric acid anhydride bond driven by GTP hydrolysis by CysN coupled to ATP hydrolysis by CysD. The sequence is that of Sulfate adenylyltransferase subunit 2 1 from Shewanella sediminis (strain HAW-EB3).